Reading from the N-terminus, the 661-residue chain is B3 domain-containing protein Os12g0591400 (661 aa).

DNA-binding regions (TF-B3) lie at residues 2 to 95 (GDQK…FNPS), 197 to 290 (KTRC…FNPS), 437 to 535 (LYIT…FKES), and 562 to 658 (TNLT…IRKG).

Its subcellular location is the nucleus. The protein is B3 domain-containing protein Os12g0591400 of Oryza sativa subsp. japonica (Rice).